The chain runs to 183 residues: Large ribosomal subunit protein uL18 (183 aa).

It belongs to the universal ribosomal protein uL18 family. In terms of assembly, part of the 50S ribosomal subunit. Contacts the 5S and 23S rRNAs.

This is one of the proteins that bind and probably mediate the attachment of the 5S RNA into the large ribosomal subunit, where it forms part of the central protuberance. This is Large ribosomal subunit protein uL18 from Halobacterium salinarum (strain ATCC 29341 / DSM 671 / R1).